Here is a 498-residue protein sequence, read N- to C-terminus: Calcium uptake protein, mitochondrial (498 aa).

The transit peptide at 1–29 (MPALSHYRSVSSLPSVDRSFLLIQRLRIH) directs the protein to the mitochondrion. EF-hand domains lie at 216 to 241 (EFFMLFDVDNDGLISFKEYIFFVTLL), 243 to 278 (IPESSFAVAFKMFDTDNNGEIDKEEFKTVMSLMRSQ), 329 to 364 (LTEEMLRLEFAHYDYKRRGSISAKDFALSMVAAADA), and 437 to 472 (LSDNVIEIAFHVFDSNQDGNLSVDEFLRVLHRRERD). Ca(2+)-binding residues include D222, D224, D226, E233, D256, D258, N260, E262, and E267. Residues D450, N452, D454, N456, and E461 each contribute to the Ca(2+) site.

It belongs to the MICU1 family. MICU1 subfamily. As to expression, expressed in both green and non-green tissues, including roots, shoots, floral buds and pollen.

Its subcellular location is the mitochondrion inner membrane. The protein resides in the mitochondrion intermembrane space. Calcium-binding protein maintaining matrix calcium levels at low concentration. Regulates mitochondrial calcium dynamics in planta by restricting influx. The chain is Calcium uptake protein, mitochondrial from Arabidopsis thaliana (Mouse-ear cress).